A 162-amino-acid chain; its full sequence is Toluate 1,2-dioxygenase subunit beta (162 aa).

The protein belongs to the bacterial ring-hydroxylating dioxygenase beta subunit family. As to quaternary structure, this dioxygenase system consists of three proteins: the two subunits of the hydroxylase component (XylX and XylY), and an electron transfer component (XylZ).

It functions in the pathway xenobiotic degradation; toluene degradation. The protein is Toluate 1,2-dioxygenase subunit beta (xylY) of Pseudomonas putida (Arthrobacter siderocapsulatus).